We begin with the raw amino-acid sequence, 402 residues long: NADH-quinone oxidoreductase subunit D (402 aa).

This sequence belongs to the complex I 49 kDa subunit family. In terms of assembly, NDH-1 is composed of 14 different subunits. Subunits NuoB, C, D, E, F, and G constitute the peripheral sector of the complex.

It is found in the cell inner membrane. The catalysed reaction is a quinone + NADH + 5 H(+)(in) = a quinol + NAD(+) + 4 H(+)(out). Its function is as follows. NDH-1 shuttles electrons from NADH, via FMN and iron-sulfur (Fe-S) centers, to quinones in the respiratory chain. The immediate electron acceptor for the enzyme in this species is believed to be ubiquinone. Couples the redox reaction to proton translocation (for every two electrons transferred, four hydrogen ions are translocated across the cytoplasmic membrane), and thus conserves the redox energy in a proton gradient. The polypeptide is NADH-quinone oxidoreductase subunit D (Azorhizobium caulinodans (strain ATCC 43989 / DSM 5975 / JCM 20966 / LMG 6465 / NBRC 14845 / NCIMB 13405 / ORS 571)).